Consider the following 56-residue polypeptide: Large ribosomal subunit protein bL32 (56 aa).

The segment at 1-34 is disordered; the sequence is MAVQQNKPSRSKRGMRRAHDALKTSTISVDKTSG.

It belongs to the bacterial ribosomal protein bL32 family.

The protein is Large ribosomal subunit protein bL32 of Baumannia cicadellinicola subsp. Homalodisca coagulata.